A 78-amino-acid chain; its full sequence is MGSLSIWHWLIVLLIVALVFGTKKLRNIGSDLGGAVKGFKEGMKDGETPEGQQRDQLSRTNTVDVDAKEKAPHSGDSR.

The helical transmembrane segment at 1–21 (MGSLSIWHWLIVLLIVALVFG) threads the bilayer. 2 stretches are compositionally biased toward basic and acidic residues: residues 39 to 57 (FKEG…RDQL) and 65 to 78 (VDAK…GDSR). The segment at 39-78 (FKEGMKDGETPEGQQRDQLSRTNTVDVDAKEKAPHSGDSR) is disordered.

It belongs to the TatA/E family. As to quaternary structure, the Tat system comprises two distinct complexes: a TatABC complex, containing multiple copies of TatA, TatB and TatC subunits, and a separate TatA complex, containing only TatA subunits. Substrates initially bind to the TatABC complex, which probably triggers association of the separate TatA complex to form the active translocon.

The protein localises to the cell inner membrane. In terms of biological role, part of the twin-arginine translocation (Tat) system that transports large folded proteins containing a characteristic twin-arginine motif in their signal peptide across membranes. TatA could form the protein-conducting channel of the Tat system. The polypeptide is Sec-independent protein translocase protein TatA (Paraburkholderia phymatum (strain DSM 17167 / CIP 108236 / LMG 21445 / STM815) (Burkholderia phymatum)).